Here is an 81-residue protein sequence, read N- to C-terminus: Small ribosomal subunit protein bS16 (81 aa).

This sequence belongs to the bacterial ribosomal protein bS16 family.

This Clostridium acetobutylicum (strain ATCC 824 / DSM 792 / JCM 1419 / IAM 19013 / LMG 5710 / NBRC 13948 / NRRL B-527 / VKM B-1787 / 2291 / W) protein is Small ribosomal subunit protein bS16.